Reading from the N-terminus, the 380-residue chain is Cytochrome b (380 aa).

4 consecutive transmembrane segments (helical) span residues 34-54 (FGSL…LLAA), 78-99 (WLLR…YLHI), 114-134 (WNTG…GYVL), and 179-199 (FFAL…IHLT). The heme b site is built by His84 and His98. Heme b is bound by residues His183 and His197. His202 contacts a ubiquinone. 4 consecutive transmembrane segments (helical) span residues 227–247 (LKDI…ALFH), 289–309 (LGGV…PFLH), 321–341 (LSQL…WIGS), and 348–368 (FIII…VLFP).

It belongs to the cytochrome b family. The cytochrome bc1 complex contains 11 subunits: 3 respiratory subunits (MT-CYB, CYC1 and UQCRFS1), 2 core proteins (UQCRC1 and UQCRC2) and 6 low-molecular weight proteins (UQCRH/QCR6, UQCRB/QCR7, UQCRQ/QCR8, UQCR10/QCR9, UQCR11/QCR10 and a cleavage product of UQCRFS1). This cytochrome bc1 complex then forms a dimer. Heme b serves as cofactor.

It is found in the mitochondrion inner membrane. Its function is as follows. Component of the ubiquinol-cytochrome c reductase complex (complex III or cytochrome b-c1 complex) that is part of the mitochondrial respiratory chain. The b-c1 complex mediates electron transfer from ubiquinol to cytochrome c. Contributes to the generation of a proton gradient across the mitochondrial membrane that is then used for ATP synthesis. The protein is Cytochrome b (MT-CYB) of Trogon curucui (Blue-crowned trogon).